A 232-amino-acid polypeptide reads, in one-letter code: Proteasome subunit alpha type-2 (232 aa).

This sequence belongs to the peptidase T1A family. In terms of assembly, the 26S proteasome consists of a 20S proteasome core and two 19S regulatory subunits. The 20S proteasome core is composed of 28 subunits that are arranged in four stacked rings, resulting in a barrel-shaped structure. The two end rings are each formed by seven alpha subunits, and the two central rings are each formed by seven beta subunits. The catalytic chamber with the active sites is on the inside of the barrel.

The protein localises to the cytoplasm. It localises to the nucleus. Functionally, the proteasome is a multicatalytic proteinase complex which is characterized by its ability to cleave peptides with Arg, Phe, Tyr, Leu, and Glu adjacent to the leaving group at neutral or slightly basic pH. The proteasome has an ATP-dependent proteolytic activity. This Dictyostelium discoideum (Social amoeba) protein is Proteasome subunit alpha type-2 (psmA2).